We begin with the raw amino-acid sequence, 110 residues long: UPF0473 protein SSP1146 (110 aa).

It belongs to the UPF0473 family.

The sequence is that of UPF0473 protein SSP1146 from Staphylococcus saprophyticus subsp. saprophyticus (strain ATCC 15305 / DSM 20229 / NCIMB 8711 / NCTC 7292 / S-41).